A 175-amino-acid chain; its full sequence is Protein FLOWERING LOCUS T (175 aa).

This sequence belongs to the phosphatidylethanolamine-binding protein family. Interacts with FD/BZIP14 and FDP/BZIP27. Interacts with FTIP1/MCTP1 in phloem companion cells. Interacts with NAKR1. Mostly localized in leaves vasculature.

It is found in the cytoplasm. The protein resides in the nucleus. Its subcellular location is the endoplasmic reticulum. Its function is as follows. Component of the mobile flower-promoting signal (floral stimulus or florigen). Promotes the transition from vegetative growth to flowering. Required for 'SEPALLATA3' (SEP3) and 'FRUITFULL' (FUL) accumulation in mature rosette leaves. Seems to acts in parallel with 'LEAFY' to induce flowering by regulating 'APETALA1'. Translated in leaves and then transported to the shoot apical meristem where it activates the transcription of several floral meristem identity genes. May play a role in both the autonomous and the long-day flowering pathways. This chain is Protein FLOWERING LOCUS T, found in Arabidopsis thaliana (Mouse-ear cress).